Reading from the N-terminus, the 426-residue chain is 3-isopropylmalate dehydratase large subunit (426 aa).

[4Fe-4S] cluster contacts are provided by cysteine 307, cysteine 367, and cysteine 370.

Belongs to the aconitase/IPM isomerase family. LeuC type 2 subfamily. In terms of assembly, heterodimer of LeuC and LeuD. [4Fe-4S] cluster is required as a cofactor.

The enzyme catalyses (2R,3S)-3-isopropylmalate = (2S)-2-isopropylmalate. The protein operates within amino-acid biosynthesis; L-leucine biosynthesis; L-leucine from 3-methyl-2-oxobutanoate: step 2/4. Catalyzes the isomerization between 2-isopropylmalate and 3-isopropylmalate, via the formation of 2-isopropylmaleate. The protein is 3-isopropylmalate dehydratase large subunit of Aliarcobacter butzleri (strain RM4018) (Arcobacter butzleri).